Here is a 311-residue protein sequence, read N- to C-terminus: Malate dehydrogenase (311 aa).

NAD(+) contacts are provided by residues 7-13 (GAAGGIG) and Asp-34. Positions 81 and 87 each coordinate substrate. NAD(+) contacts are provided by residues Asn-94 and 117–119 (ITN). Substrate is bound by residues Asn-119 and Arg-153. The active-site Proton acceptor is His-177. Met-227 contributes to the NAD(+) binding site.

This sequence belongs to the LDH/MDH superfamily. MDH type 1 family. In terms of assembly, homodimer.

The enzyme catalyses (S)-malate + NAD(+) = oxaloacetate + NADH + H(+). Its function is as follows. Catalyzes the reversible oxidation of malate to oxaloacetate. This chain is Malate dehydrogenase, found in Vibrio campbellii (strain ATCC BAA-1116).